Consider the following 263-residue polypeptide: Ribosomal RNA small subunit methyltransferase A (263 aa).

Positions 18, 43, 65, 91, and 110 each coordinate S-adenosyl-L-methionine.

This sequence belongs to the class I-like SAM-binding methyltransferase superfamily. rRNA adenine N(6)-methyltransferase family. RsmA subfamily.

The protein resides in the cytoplasm. The enzyme catalyses adenosine(1518)/adenosine(1519) in 16S rRNA + 4 S-adenosyl-L-methionine = N(6)-dimethyladenosine(1518)/N(6)-dimethyladenosine(1519) in 16S rRNA + 4 S-adenosyl-L-homocysteine + 4 H(+). Functionally, specifically dimethylates two adjacent adenosines (A1518 and A1519) in the loop of a conserved hairpin near the 3'-end of 16S rRNA in the 30S particle. May play a critical role in biogenesis of 30S subunits. The polypeptide is Ribosomal RNA small subunit methyltransferase A (Ehrlichia chaffeensis (strain ATCC CRL-10679 / Arkansas)).